The primary structure comprises 792 residues: Ubiquitin carboxyl-terminal hydrolase 10 (792 aa).

Position 2 is an N-acetylalanine (Ala2). An interaction with p53/TP53 region spans residues 2–99 (ALHNPQYIFG…ILGCTTSKKI (98 aa)). A G3BP1-binding region spans residues 6–21 (PQYIFGDFSPDEFNQF). Position 24 is a phosphothreonine (Thr24). A disordered region spans residues 126 to 164 (SNAEAETLENDSGAGGLGQRERKKKKKRPPGYYSYLKDG). 2 positions are modified to phosphoserine: Ser208 and Ser223. A compositionally biased stretch (basic and acidic residues) spans 300–309 (DEGADLDPAK). A disordered region spans residues 300–323 (DEGADLDPAKPESQSPPAESALSA). Position 314 is a phosphoserine (Ser314). Ser330 bears the Phosphoserine; by ATM mark. The segment at 350 to 369 (PMAYVETKCSPPVPSPLASE) is disordered. 2 positions are modified to phosphoserine: Ser359 and Ser364. Residues 409–789 (RGLINKGNWC…TAYLLYYRRV (381 aa)) enclose the USP domain. Cys418 (nucleophile) is an active-site residue. Residue Ser541 is modified to Phosphoserine. Positions 542 to 580 (PTHEKHSVSNGPRSDLIEDEELEDTGKGSEDEWEQVGPK) are disordered. Position 566 is a phosphothreonine (Thr566). Position 570 is a phosphoserine (Ser570). The Proton acceptor role is filled by His743.

Belongs to the peptidase C19 family. USP10 subfamily. As to quaternary structure, found in a deubiquitination complex with TANK, USP10 and ZC3H12A; this complex inhibits genotoxic stress- or interleukin-1-beta (IL1B)-mediated NF-kappa-B activation by promoting IKBKG or TRAF6 deubiquitination. Interacts with IKBKG; this interaction increases in response to DNA damage. Interacts with TANK; this interaction increases in response to DNA damage. Interacts with TRAF6; this interaction increases in response to DNA damage. Interacts with ZC3H12A; this interaction increases in response to DNA damage. Interacts with G3BP1 (via NTF2 domain) and G3BP2 (via NTF2 domain); inhibiting stress granule formation. Phosphorylated by ATM following DNA damage, leading to stabilization and translocation it to the nucleus. In terms of processing, ubiquitinated. Deubiquitinated by USP13.

It localises to the cytoplasm. The protein localises to the nucleus. It is found in the early endosome. The enzyme catalyses Thiol-dependent hydrolysis of ester, thioester, amide, peptide and isopeptide bonds formed by the C-terminal Gly of ubiquitin (a 76-residue protein attached to proteins as an intracellular targeting signal).. Its activity is regulated as follows. Specifically inhibited by spautin-1 (specific and potent autophagy inhibitor-1), a derivative of MBCQ that binds to USP10 and inhibits deubiquitinase activity. Regulated by PIK3C3/VPS34-containing complexes. In terms of biological role, hydrolase that can remove conjugated ubiquitin from target proteins such as p53/TP53, RPS2/us5, RPS3/us3, RPS10/eS10, BECN1, SNX3 and CFTR. Acts as an essential regulator of p53/TP53 stability: in unstressed cells, specifically deubiquitinates p53/TP53 in the cytoplasm, leading to counteract MDM2 action and stabilize p53/TP53. Following DNA damage, translocates to the nucleus and deubiquitinates p53/TP53, leading to regulate the p53/TP53-dependent DNA damage response. Component of a regulatory loop that controls autophagy and p53/TP53 levels: mediates deubiquitination of BECN1, a key regulator of autophagy, leading to stabilize the PIK3C3/VPS34-containing complexes. In turn, PIK3C3/VPS34-containing complexes regulate USP10 stability, suggesting the existence of a regulatory system by which PIK3C3/VPS34-containing complexes regulate p53/TP53 protein levels via USP10 and USP13. Does not deubiquitinate MDM2. Plays a key role in 40S ribosome subunit recycling when a ribosome has stalled during translation: acts both by inhibiting formation of stress granules, which store stalled translation pre-initiation complexes, and mediating deubiquitination of 40S ribosome subunits. Acts as a negative regulator of stress granules formation by lowering G3BP1 and G3BP2 valence, thereby preventing G3BP1 and G3BP2 ability to undergo liquid-liquid phase separation (LLPS) and assembly of stress granules. Promotes 40S ribosome subunit recycling following ribosome dissociation in response to ribosome stalling by mediating deubiquitination of 40S ribosomal proteins RPS2/us5, RPS3/us3 and RPS10/eS10, thereby preventing their degradation by the proteasome. Part of a ribosome quality control that takes place when ribosomes have stalled during translation initiation (iRQC): USP10 acts by removing monoubiquitination of RPS2/us5 and RPS3/us3, promoting 40S ribosomal subunit recycling. Deubiquitinates CFTR in early endosomes, enhancing its endocytic recycling. Involved in a TANK-dependent negative feedback response to attenuate NF-kappa-B activation via deubiquitinating IKBKG or TRAF6 in response to interleukin-1-beta (IL1B) stimulation or upon DNA damage. Deubiquitinates TBX21 leading to its stabilization. Plays a negative role in the RLR signaling pathway upon RNA virus infection by blocking the RIGI-mediated MAVS activation. Mechanistically, removes the unanchored 'Lys-63'-linked polyubiquitin chains of MAVS to inhibit its aggregation, essential for its activation. The protein is Ubiquitin carboxyl-terminal hydrolase 10 (Usp10) of Mus musculus (Mouse).